Here is a 116-residue protein sequence, read N- to C-terminus: NADH-ubiquinone oxidoreductase chain 3 (116 aa).

Helical transmembrane passes span 6-26 (FMLL…FWLA), 56-76 (FFLV…LLPL), and 85-105 (PLLT…GLVY).

Belongs to the complex I subunit 3 family.

It localises to the mitochondrion membrane. The catalysed reaction is a ubiquinone + NADH + 5 H(+)(in) = a ubiquinol + NAD(+) + 4 H(+)(out). Its function is as follows. Core subunit of the mitochondrial membrane respiratory chain NADH dehydrogenase (Complex I) that is believed to belong to the minimal assembly required for catalysis. Complex I functions in the transfer of electrons from NADH to the respiratory chain. The immediate electron acceptor for the enzyme is believed to be ubiquinone. In Struthio camelus (Common ostrich), this protein is NADH-ubiquinone oxidoreductase chain 3 (MT-ND3).